We begin with the raw amino-acid sequence, 391 residues long: Processive diacylglycerol beta-glucosyltransferase (391 aa).

Belongs to the glycosyltransferase 28 family. UgtP subfamily.

Its subcellular location is the cell membrane. The enzyme catalyses a 1,2-diacyl-3-O-(beta-D-glucopyranosyl)-sn-glycerol + UDP-alpha-D-glucose = a 1,2-diacyl-3-O-(beta-D-Glc-(1-&gt;6)-beta-D-Glc)-sn-glycerol + UDP + H(+). The catalysed reaction is a 1,2-diacyl-sn-glycerol + UDP-alpha-D-glucose = a 1,2-diacyl-3-O-(beta-D-glucopyranosyl)-sn-glycerol + UDP + H(+). It functions in the pathway glycolipid metabolism; diglucosyl-diacylglycerol biosynthesis. Processive glucosyltransferase involved in the biosynthesis of both the bilayer- and non-bilayer-forming membrane glucolipids. Is able to successively transfer two glucosyl residues to diacylglycerol (DAG), thereby catalyzing the formation of beta-monoglucosyl-DAG (3-O-(beta-D-glucopyranosyl)-1,2-diacyl-sn-glycerol) and beta-diglucosyl-DAG (3-O-(beta-D-glucopyranosyl-beta-(1-&gt;6)-D-glucopyranosyl)-1,2-diacyl-sn-glycerol). Beta-diglucosyl-DAG is the predominant glycolipid found in Bacillales and is also used as a membrane anchor for lipoteichoic acid (LTA). In Staphylococcus aureus (strain MW2), this protein is Processive diacylglycerol beta-glucosyltransferase.